Here is a 1117-residue protein sequence, read N- to C-terminus: DNA-directed RNA polymerase subunit beta (1117 aa).

Positions 1094–1117 (QLARRTPPRPTYESLSRESLDDDE) are disordered. Positions 1108–1117 (LSRESLDDDE) are enriched in basic and acidic residues.

The protein belongs to the RNA polymerase beta chain family. In cyanobacteria the RNAP catalytic core is composed of 2 alpha, 1 beta, 1 beta', 1 gamma and 1 omega subunit. When a sigma factor is associated with the core the holoenzyme is formed, which can initiate transcription.

The catalysed reaction is RNA(n) + a ribonucleoside 5'-triphosphate = RNA(n+1) + diphosphate. In terms of biological role, DNA-dependent RNA polymerase catalyzes the transcription of DNA into RNA using the four ribonucleoside triphosphates as substrates. This chain is DNA-directed RNA polymerase subunit beta, found in Trichormus variabilis (strain ATCC 29413 / PCC 7937) (Anabaena variabilis).